The chain runs to 328 residues: Endo-beta-1,4-glucanase B (328 aa).

A signal peptide spans 1–17 (MKVNTLLVAVAAGTAMA). Residue asparagine 95 is glycosylated (N-linked (GlcNAc...) asparagine). Residue glutamate 155 is the Proton donor of the active site. Catalysis depends on glutamate 262, which acts as the Nucleophile.

The protein belongs to the glycosyl hydrolase 5 (cellulase A) family.

Its subcellular location is the secreted. It catalyses the reaction Endohydrolysis of (1-&gt;4)-beta-D-glucosidic linkages in cellulose, lichenin and cereal beta-D-glucans.. In terms of biological role, has endoglucanase activity on substrates containing beta-1,4 glycosidic bonds, like in carboxymethylcellulose (CMC), hydroxyethylcellulose (HEC) and beta-glucan. Involved in the degradation of complex natural cellulosic substrates. The polypeptide is Endo-beta-1,4-glucanase B (eglB) (Emericella nidulans (strain FGSC A4 / ATCC 38163 / CBS 112.46 / NRRL 194 / M139) (Aspergillus nidulans)).